A 34-amino-acid polypeptide reads, in one-letter code: MSDIN-like toxin proprotein 4 (34 aa).

The propeptide occupies 1 to 10; sequence MSDINATRLP. The cyclopeptide (Val-Pro) cross-link spans 11–17; the sequence is VWIGYSP. A propeptide spanning residues 18-34 is cleaved from the precursor; the sequence is CVGDDCIALLTRGEGLC.

Belongs to the MSDIN fungal toxin family. In terms of processing, processed by the macrocyclase-peptidase enzyme POPB to yield a toxic cyclic heptapeptide. POPB first removes 10 residues from the N-terminus. Conformational trapping of the remaining peptide forces the enzyme to release this intermediate rather than proceed to macrocyclization. The enzyme rebinds the remaining peptide in a different conformation and catalyzes macrocyclization of the N-terminal 7 residues. As to expression, expressed in basidiocarps.

Functionally, probable toxin that belongs to the MSDIN-like toxin family responsible for a large number of food poisoning cases and deaths. This is MSDIN-like toxin proprotein 4 from Amanita exitialis (Guangzhou destroying angel).